We begin with the raw amino-acid sequence, 258 residues long: Apolipoprotein A-I (258 aa).

An N-terminal signal peptide occupies residues 1–18; it reads MKFLVLALTILLAAGTQA. The interval 32–63 is 3 X approximate tandem repeats; the sequence is VKAALNMYIAQVKLTAQRSIDLLDDTEYKEYK. 2 tandem repeats follow at residues 64-85 and 86-106. Residues 64-258 form a 10 X approximate tandem repeats region; it reads MQLSQSLDNL…WLSTRPSARP (195 aa). A 3; half-length repeat occupies 107-117; the sequence is KDVEDVRTQLE. A run of 7 repeats spans residues 118–139, 140–161, 162–183, 184–205, 206–227, 228–238, and 239–258. Positions 233-258 are disordered; it reads FKARWAPPPRRPSKSSWLSTRPSARP. Residues 246 to 258 are compositionally biased toward polar residues; sequence KSSWLSTRPSARP.

Belongs to the apolipoprotein A1/A4/E family. As to expression, major protein of plasma HDL, also found in chylomicrons. Expressed in liver, intestine and muscle.

It localises to the secreted. In terms of biological role, participates in the reverse transport of cholesterol from tissues to the liver for excretion by promoting cholesterol efflux from tissues and by acting as a cofactor for the lecithin cholesterol acyltransferase (LCAT). The chain is Apolipoprotein A-I (apoa1) from Salmo salar (Atlantic salmon).